The sequence spans 150 residues: 3-hydroxyacyl-[acyl-carrier-protein] dehydratase FabZ (150 aa).

Histidine 54 is a catalytic residue.

It belongs to the thioester dehydratase family. FabZ subfamily.

It is found in the cytoplasm. The enzyme catalyses a (3R)-hydroxyacyl-[ACP] = a (2E)-enoyl-[ACP] + H2O. Its function is as follows. Involved in unsaturated fatty acids biosynthesis. Catalyzes the dehydration of short chain beta-hydroxyacyl-ACPs and long chain saturated and unsaturated beta-hydroxyacyl-ACPs. This Colwellia psychrerythraea (strain 34H / ATCC BAA-681) (Vibrio psychroerythus) protein is 3-hydroxyacyl-[acyl-carrier-protein] dehydratase FabZ.